The primary structure comprises 191 residues: MKKLYLASKNQGKIEEYKKLLLNVNCQLLLQPESIEVEENGITFRENAIKKASEVSKKTRNYAIADDSGICIDALDGRPGIYSSRYAENDQKRIERVLHELDGEKNRGAFFIANVCVCSPSRDVILESEAKCFGNIILSPRGKGGFGYDPIFEERSTRLTFAEMNNVIKDSCSHRGRALKKIIPGLLEIFS.

Substrate is bound at residue 8–13; the sequence is SKNQGK. Residues Glu38 and Asp67 each coordinate Mg(2+). Residue Asp67 is the Proton acceptor of the active site. Residues Ser68, 146–149, Lys169, and 174–175 contribute to the substrate site; these read FGYD and HR.

Belongs to the HAM1 NTPase family. Homodimer. Mg(2+) serves as cofactor.

It catalyses the reaction XTP + H2O = XMP + diphosphate + H(+). The catalysed reaction is dITP + H2O = dIMP + diphosphate + H(+). It carries out the reaction ITP + H2O = IMP + diphosphate + H(+). Functionally, pyrophosphatase that catalyzes the hydrolysis of nucleoside triphosphates to their monophosphate derivatives, with a high preference for the non-canonical purine nucleotides XTP (xanthosine triphosphate), dITP (deoxyinosine triphosphate) and ITP. Seems to function as a house-cleaning enzyme that removes non-canonical purine nucleotides from the nucleotide pool, thus preventing their incorporation into DNA/RNA and avoiding chromosomal lesions. In Prochlorococcus marinus subsp. pastoris (strain CCMP1986 / NIES-2087 / MED4), this protein is dITP/XTP pyrophosphatase.